Consider the following 196-residue polypeptide: FMN-dependent NADH:quinone oxidoreductase (196 aa).

FMN contacts are provided by residues S10 and 17-19 (SYS).

Belongs to the azoreductase type 1 family. Homodimer. Requires FMN as cofactor.

The enzyme catalyses 2 a quinone + NADH + H(+) = 2 a 1,4-benzosemiquinone + NAD(+). The catalysed reaction is N,N-dimethyl-1,4-phenylenediamine + anthranilate + 2 NAD(+) = 2-(4-dimethylaminophenyl)diazenylbenzoate + 2 NADH + 2 H(+). Quinone reductase that provides resistance to thiol-specific stress caused by electrophilic quinones. In terms of biological role, also exhibits azoreductase activity. Catalyzes the reductive cleavage of the azo bond in aromatic azo compounds to the corresponding amines. The protein is FMN-dependent NADH:quinone oxidoreductase of Metamycoplasma arthritidis (strain 158L3-1) (Mycoplasma arthritidis).